Here is a 279-residue protein sequence, read N- to C-terminus: 4-deoxy-L-threo-5-hexosulose-uronate ketol-isomerase (279 aa).

Histidine 197, histidine 199, glutamate 204, and histidine 246 together coordinate Zn(2+).

It belongs to the KduI family. It depends on Zn(2+) as a cofactor.

It carries out the reaction 5-dehydro-4-deoxy-D-glucuronate = 3-deoxy-D-glycero-2,5-hexodiulosonate. The protein operates within glycan metabolism; pectin degradation; 2-dehydro-3-deoxy-D-gluconate from pectin: step 4/5. Catalyzes the isomerization of 5-dehydro-4-deoxy-D-glucuronate to 3-deoxy-D-glycero-2,5-hexodiulosonate. This Kineococcus radiotolerans (strain ATCC BAA-149 / DSM 14245 / SRS30216) protein is 4-deoxy-L-threo-5-hexosulose-uronate ketol-isomerase.